The chain runs to 567 residues: Urease subunit alpha (567 aa).

The 439-residue stretch at 129–567 (GGIDSHIHFI…LPMAQRYFLF (439 aa)) folds into the Urease domain. His134, His136, and Lys217 together coordinate Ni(2+). At Lys217 the chain carries N6-carboxylysine. His219 lines the substrate pocket. Ni(2+)-binding residues include His246 and His272. His320 acts as the Proton donor in catalysis. Asp360 contributes to the Ni(2+) binding site.

The protein belongs to the metallo-dependent hydrolases superfamily. Urease alpha subunit family. As to quaternary structure, heterotrimer of UreA (gamma), UreB (beta) and UreC (alpha) subunits. Three heterotrimers associate to form the active enzyme. Requires Ni cation as cofactor. Post-translationally, carboxylation allows a single lysine to coordinate two nickel ions.

The protein localises to the cytoplasm. The catalysed reaction is urea + 2 H2O + H(+) = hydrogencarbonate + 2 NH4(+). It participates in nitrogen metabolism; urea degradation; CO(2) and NH(3) from urea (urease route): step 1/1. The polypeptide is Urease subunit alpha (Tolumonas auensis (strain DSM 9187 / NBRC 110442 / TA 4)).